The following is a 277-amino-acid chain: Large ribosomal subunit protein uL2 (277 aa).

A disordered region spans residues 218–277 (PTVRGSVMNPNDHPHGGGEGKAPVGRKAPSTPWGKPALGLKTRNKKAKSDKLIVRRRNEK). Over residues 264–277 (AKSDKLIVRRRNEK) the composition is skewed to basic and acidic residues.

It belongs to the universal ribosomal protein uL2 family. Part of the 50S ribosomal subunit. Forms a bridge to the 30S subunit in the 70S ribosome.

In terms of biological role, one of the primary rRNA binding proteins. Required for association of the 30S and 50S subunits to form the 70S ribosome, for tRNA binding and peptide bond formation. It has been suggested to have peptidyltransferase activity; this is somewhat controversial. Makes several contacts with the 16S rRNA in the 70S ribosome. The chain is Large ribosomal subunit protein uL2 from Streptococcus pyogenes serotype M4 (strain MGAS10750).